The sequence spans 130 residues: uncharacterized protein (130 aa).

The N-terminal stretch at 1–18 (MVEVWWSLIGAAVPALIA) is a signal peptide.

This is an uncharacterized protein from Arabidopsis thaliana (Mouse-ear cress).